Reading from the N-terminus, the 151-residue chain is Transcriptional repressor NrdR (151 aa).

Residues 3–34 (CPYCAYGESKVVDSRSTEDGSSIRRRRECLKC) fold into a zinc finger. Residues 49–139 (ILVIKKNMSR…VYRQFKDINT (91 aa)) enclose the ATP-cone domain.

The protein belongs to the NrdR family. Requires Zn(2+) as cofactor.

In terms of biological role, negatively regulates transcription of bacterial ribonucleotide reductase nrd genes and operons by binding to NrdR-boxes. This is Transcriptional repressor NrdR from Clostridium botulinum (strain ATCC 19397 / Type A).